We begin with the raw amino-acid sequence, 619 residues long: Phosphomethylpyrimidine synthase (619 aa).

The span at 93-104 shows a compositional bias: basic and acidic residues; the sequence is IKPEDNGLKGPD. Residues 93 to 114 are disordered; the sequence is IKPEDNGLKGPDRSGGVTPFPN. Residues Asn217, Met246, Tyr275, His311, 331 to 333, 372 to 375, and Glu411 contribute to the substrate site; these read SRG and DGLR. Residue His415 coordinates Zn(2+). Tyr438 serves as a coordination point for substrate. His479 is a binding site for Zn(2+). The [4Fe-4S] cluster site is built by Cys559, Cys562, and Cys567.

The protein belongs to the ThiC family. As to quaternary structure, homodimer. [4Fe-4S] cluster is required as a cofactor.

The catalysed reaction is 5-amino-1-(5-phospho-beta-D-ribosyl)imidazole + S-adenosyl-L-methionine = 4-amino-2-methyl-5-(phosphooxymethyl)pyrimidine + CO + 5'-deoxyadenosine + formate + L-methionine + 3 H(+). The protein operates within cofactor biosynthesis; thiamine diphosphate biosynthesis. In terms of biological role, catalyzes the synthesis of the hydroxymethylpyrimidine phosphate (HMP-P) moiety of thiamine from aminoimidazole ribotide (AIR) in a radical S-adenosyl-L-methionine (SAM)-dependent reaction. The polypeptide is Phosphomethylpyrimidine synthase (Rhizorhabdus wittichii (strain DSM 6014 / CCUG 31198 / JCM 15750 / NBRC 105917 / EY 4224 / RW1) (Sphingomonas wittichii)).